The chain runs to 52 residues: Mitogenic lectin alpha chain (52 aa).

This sequence belongs to the leguminous lectin family. In terms of assembly, tetramer of two alpha and two beta chains.

In Vicia sativa (Spring vetch), this protein is Mitogenic lectin alpha chain.